The chain runs to 235 residues: Phosphoribosylaminoimidazole-succinocarboxamide synthase (235 aa).

This sequence belongs to the SAICAR synthetase family.

The catalysed reaction is 5-amino-1-(5-phospho-D-ribosyl)imidazole-4-carboxylate + L-aspartate + ATP = (2S)-2-[5-amino-1-(5-phospho-beta-D-ribosyl)imidazole-4-carboxamido]succinate + ADP + phosphate + 2 H(+). It functions in the pathway purine metabolism; IMP biosynthesis via de novo pathway; 5-amino-1-(5-phospho-D-ribosyl)imidazole-4-carboxamide from 5-amino-1-(5-phospho-D-ribosyl)imidazole-4-carboxylate: step 1/2. The sequence is that of Phosphoribosylaminoimidazole-succinocarboxamide synthase from Exiguobacterium sibiricum (strain DSM 17290 / CCUG 55495 / CIP 109462 / JCM 13490 / 255-15).